The chain runs to 970 residues: uncharacterized protein (970 aa).

The helical transmembrane segment at 12–32 threads the bilayer; sequence VIFFSVFFVIFFLFIESSVGF.

The protein to E.coli YtfN.

The protein localises to the membrane. This is an uncharacterized protein from Buchnera aphidicola subsp. Acyrthosiphon pisum (strain APS) (Acyrthosiphon pisum symbiotic bacterium).